We begin with the raw amino-acid sequence, 44 residues long: Thymosin beta (44 aa).

The span at 1–17 (MSDKPDVKEVESFDKTT) shows a compositional bias: basic and acidic residues. Residues 1 to 44 (MSDKPDVKEVESFDKTTLKKTTTNEKNTLPTKEVIEQEKSGGSD) form a disordered region. Low complexity predominate over residues 19 to 32 (KKTTTNEKNTLPTK). Residues 33-44 (EVIEQEKSGGSD) are compositionally biased toward basic and acidic residues.

The protein belongs to the thymosin beta family.

It localises to the cytoplasm. The protein localises to the cytoskeleton. Plays an important role in the organization of the cytoskeleton. Binds to and sequesters actin monomers (G actin) and therefore inhibits actin polymerization. In Gillichthys mirabilis (Long-jawed mudsucker), this protein is Thymosin beta.